The following is a 72-amino-acid chain: Translation initiation factor IF-1 (72 aa).

Positions 1–72 (MAKTDLLEVQ…ERGRIVFRHK (72 aa)) constitute an S1-like domain.

The protein belongs to the IF-1 family. In terms of assembly, component of the 30S ribosomal translation pre-initiation complex which assembles on the 30S ribosome in the order IF-2 and IF-3, IF-1 and N-formylmethionyl-tRNA(fMet); mRNA recruitment can occur at any time during PIC assembly.

It localises to the cytoplasm. In terms of biological role, one of the essential components for the initiation of protein synthesis. Stabilizes the binding of IF-2 and IF-3 on the 30S subunit to which N-formylmethionyl-tRNA(fMet) subsequently binds. Helps modulate mRNA selection, yielding the 30S pre-initiation complex (PIC). Upon addition of the 50S ribosomal subunit IF-1, IF-2 and IF-3 are released leaving the mature 70S translation initiation complex. The polypeptide is Translation initiation factor IF-1 (Spiroplasma kunkelii).